The primary structure comprises 855 residues: Photoactivated adenylate cyclase subunit beta-like protein 1224-5/9F (855 aa).

The 94-residue stretch at 56–149 folds into the BLUF 1 domain; that stretch reads LRRLMYLSKG…GRMSGVWHMK (94 aa). Residues 420–444 form a disordered region; the sequence is RPPIFDDTPKCNPRPRTPGCEGRQR. In terms of domain architecture, BLUF 2 spans 471 to 563; that stretch reads VPTLTYISHA…RVYPSEWTLT (93 aa). Residues 813-827 show a composition bias toward basic and acidic residues; the sequence is RSGEKPLTEPEEAKL. The disordered stretch occupies residues 813–855; sequence RSGEKPLTEPEEAKLDFSPGRVRHGDSGRRSNSAQGKLSIQVR. The segment covering 842–855 has biased composition (polar residues); that stretch reads RSNSAQGKLSIQVR.

In terms of assembly, heterotetramer of two alpha and two beta subunits.

The protein localises to the cell projection. Its subcellular location is the cilium. It localises to the flagellum. This is Photoactivated adenylate cyclase subunit beta-like protein 1224-5/9F from Euglena gracilis.